Consider the following 480-residue polypeptide: Ochratoxinase (480 aa).

Zn(2+) is bound by residues His111, His113, Lys246, His287, and His307. Lys246 is a catalytic residue. Asp378 is a catalytic residue.

It belongs to the metallo-dependent hydrolases superfamily. Ochratoxinase amidase 2 family. Homooctamer. Zn(2+) serves as cofactor.

The protein localises to the secreted. The enzyme catalyses ochratoxin A + H2O = ochratoxin alpha + L-phenylalanine. Its activity is regulated as follows. The Zn(2+)-specific chelator 1,10-phenanthroline inhibits the enzyme activity. Functionally, carboxypeptidase that catalyzes the release of a C-terminal amino acid with specific catalytic activity for aromatic amino acids such as phenylalanine. Is able to degrade ochratoxin A, one of the five major mycotoxins most harmful to humans and animals that is produced by Aspergillus and Penicillium species and occurs in a wide range of agricultural products. This is Ochratoxinase from Aspergillus niger (strain ATCC 1015 / CBS 113.46 / FGSC A1144 / LSHB Ac4 / NCTC 3858a / NRRL 328 / USDA 3528.7).